The sequence spans 610 residues: Glutamine--fructose-6-phosphate aminotransferase [isomerizing] (610 aa).

Cysteine 2 serves as the catalytic Nucleophile; for GATase activity. Positions 2-218 constitute a Glutamine amidotransferase type-2 domain; that stretch reads CGIVGAVAQR…EGDVAEITRH (217 aa). SIS domains follow at residues 286–426 and 459–600; these read AADI…LKGR and LSED…VDQP. The active-site For Fru-6P isomerization activity is the lysine 605.

Homodimer.

The protein localises to the cytoplasm. The catalysed reaction is D-fructose 6-phosphate + L-glutamine = D-glucosamine 6-phosphate + L-glutamate. In terms of biological role, catalyzes the first step in hexosamine metabolism, converting fructose-6P into glucosamine-6P using glutamine as a nitrogen source. The sequence is that of Glutamine--fructose-6-phosphate aminotransferase [isomerizing] from Haemophilus ducreyi (strain 35000HP / ATCC 700724).